We begin with the raw amino-acid sequence, 151 residues long: Putative pre-16S rRNA nuclease (151 aa).

The protein belongs to the YqgF nuclease family.

Its subcellular location is the cytoplasm. Functionally, could be a nuclease involved in processing of the 5'-end of pre-16S rRNA. The sequence is that of Putative pre-16S rRNA nuclease from Pelagibacter ubique (strain HTCC1062).